The chain runs to 538 residues: Putative cysteine ligase BshC (538 aa).

Residues 460-484 (KINEQIELLERMLKRNVEKKHEVEL) are a coiled coil.

Belongs to the BshC family.

In terms of biological role, involved in bacillithiol (BSH) biosynthesis. May catalyze the last step of the pathway, the addition of cysteine to glucosamine malate (GlcN-Mal) to generate BSH. The protein is Putative cysteine ligase BshC of Bacillus cereus (strain ATCC 10987 / NRS 248).